The primary structure comprises 37 residues: Natriuretic peptide PNP (37 aa).

The cysteines at positions 14 and 30 are disulfide-linked.

In terms of tissue distribution, expressed by the venom gland.

The protein localises to the secreted. Functionally, increases urine flow and decreases blood pressure when administered to rats by intravenous injection. Inhibits thrombin-induced platelet aggregation. Stimulates cGMP production via the natriuretic peptide receptor-A (NPR1). This is Natriuretic peptide PNP from Pseudocerastes persicus (Persian horned viper).